A 202-amino-acid polypeptide reads, in one-letter code: UPF0301 protein mlr7511 (202 aa).

This sequence belongs to the UPF0301 (AlgH) family.

The polypeptide is UPF0301 protein mlr7511 (Mesorhizobium japonicum (strain LMG 29417 / CECT 9101 / MAFF 303099) (Mesorhizobium loti (strain MAFF 303099))).